Here is a 380-residue protein sequence, read N- to C-terminus: Putative 8-amino-7-oxononanoate synthase (380 aa).

Residue arginine 18 participates in substrate binding. Residue 106–107 coordinates pyridoxal 5'-phosphate; it reads GY. Histidine 131 contacts substrate. Pyridoxal 5'-phosphate is bound by residues serine 179, 205-208, and 236-239; these read DEAH and TFGK. Residue lysine 239 is modified to N6-(pyridoxal phosphate)lysine. Position 352 (threonine 352) interacts with substrate.

This sequence belongs to the class-II pyridoxal-phosphate-dependent aminotransferase family. BioF subfamily. As to quaternary structure, homodimer. The cofactor is pyridoxal 5'-phosphate.

The catalysed reaction is 6-carboxyhexanoyl-[ACP] + L-alanine + H(+) = (8S)-8-amino-7-oxononanoate + holo-[ACP] + CO2. Its pathway is cofactor biosynthesis; biotin biosynthesis. In terms of biological role, catalyzes the decarboxylative condensation of pimeloyl-[acyl-carrier protein] and L-alanine to produce 8-amino-7-oxononanoate (AON), [acyl-carrier protein], and carbon dioxide. This Neisseria meningitidis serogroup C (strain 053442) protein is Putative 8-amino-7-oxononanoate synthase (bioF).